The sequence spans 196 residues: Ribonuclease HII (196 aa).

One can recognise an RNase H type-2 domain in the interval 4–196 (IWVCGVDEAG…PVRRVLEGSF (193 aa)). Residues Asp10, Glu11, and Asp106 each contribute to the a divalent metal cation site.

It belongs to the RNase HII family. The cofactor is Mn(2+). Mg(2+) serves as cofactor.

The protein resides in the cytoplasm. It carries out the reaction Endonucleolytic cleavage to 5'-phosphomonoester.. Endonuclease that specifically degrades the RNA of RNA-DNA hybrids. The sequence is that of Ribonuclease HII from Polynucleobacter asymbioticus (strain DSM 18221 / CIP 109841 / QLW-P1DMWA-1) (Polynucleobacter necessarius subsp. asymbioticus).